A 198-amino-acid polypeptide reads, in one-letter code: MRYPEHLLKLIHILKKFPGVGHKSAERFAFHLLNWPMEHLIELSETVKNTKDKIKQCLNCGCLTDEAACYFCDINQRDSQIICVTAFPRDVFSIEETHEYRGLYHVLGGVLSPLENRGPEHLSISRLKHRIQDLQIKEVVIALDSTLEGDATALFLKQELAADDIQISRLAFGLPMGSSLDYVDGGTLARALAGRSRF.

Residues 57-72 (CLNCGCLTDEAACYFC) form a C4-type zinc finger. Positions 80–175 (QIICVTAFPR…QISRLAFGLP (96 aa)) constitute a Toprim domain.

This sequence belongs to the RecR family.

Its function is as follows. May play a role in DNA repair. It seems to be involved in an RecBC-independent recombinational process of DNA repair. It may act with RecF and RecO. This chain is Recombination protein RecR, found in Protochlamydia amoebophila (strain UWE25).